Consider the following 902-residue polypeptide: Potassium/sodium hyperpolarization-activated cyclic nucleotide-gated channel 1 (902 aa).

The interval 1-75 (MEGGGKPNSA…PAGSFEDAEG (75 aa)) is disordered. Topologically, residues 1–131 (MEGGGKPNSA…WIIHPYSDFR (131 aa)) are cytoplasmic. A helical membrane pass occupies residues 132–153 (FYWDLIMLIMMVGNLVIIPVGI). Topologically, residues 154–162 (TFFTEQTTT) are extracellular. The chain crosses the membrane as a helical span at residues 163–183 (PWIIFNVASDTVFLLDLIMNF). Over 184 to 204 (RTGTVNEDSSEIILDPKVIKM) the chain is Cytoplasmic. Residues 205–225 (NYLKSWFVVDFISSIPVDYIF) traverse the membrane as a helical segment. Residues 226–249 (LIVEKGMDSEVYKTARALRIVRFT) lie on the Extracellular side of the membrane. The helical; Voltage-sensor transmembrane segment at 250-270 (KILSLLRLLRLSRLIRYIHQW) threads the bilayer. The Cytoplasmic segment spans residues 271–284 (EEIFHMTYDLASAV). Residues 285–307 (VRIFNLIGMMLLLCHWDGCLQFL) traverse the membrane as a helical segment. The Extracellular portion of the chain corresponds to 308–333 (VPLLQDFPPDCWVSLNEMVNDSWGKQ). N-linked (GlcNAc...) asparagine glycosylation occurs at N327. An intramembrane region (pore-forming) is located at residues 334-355 (YSYALFKAMSHMLCIGYGAQAP). A Selectivity filter motif is present at residues 347-351 (CIGYG). At 356-360 (VSMSD) the chain is on the extracellular side. The helical transmembrane segment at 361-381 (LWITMLSMIVGATCYAMFVGH) threads the bilayer. Residues 382–902 (ATALIQSLDS…AEKPRFASNL (521 aa)) are Cytoplasmic-facing. 3',5'-cyclic AMP-binding residues include G528, E529, C531, R538, T539, R579, and R582. Disordered stretches follow at residues 634 to 681 (TALN…QPSA), 713 to 824 (ASQL…VGES), and 858 to 902 (MSSG…ASNL). Low complexity-rich tracts occupy residues 639 to 680 (TSST…PQPS), 720 to 736 (QQPQPQLQQSQVQQTQP), and 744 to 769 (QPQQQQQQQQQQQQQQQQQQQQQQPQ). The segment covering 770–793 (TPGSSTPKNEVHKSTQALHNTNLT) has biased composition (polar residues). Residues 867-877 (RGVPPAPPPPA) are compositionally biased toward pro residues. Basic and acidic residues predominate over residues 889–902 (KDPDAEKPRFASNL).

It belongs to the potassium channel HCN family. In terms of assembly, homotetramer. Heterotetramer with HCN2. The potassium channel is composed of a homo- or heterotetrameric complex of pore-forming subunits. Interacts with KCNE2. Interacts with the SH3 domain of CSK. In terms of tissue distribution, highly expressed in cerebral cortex, cerebellum, throughout the hippocampus, in medial habenula, anterior dorsal nucleus in the thalamus, tenia tecta, several nuclei of the general motor system and in optic nerve layer. Detected in a subset of elongated cells in taste buds.

The protein localises to the cell membrane. The catalysed reaction is Na(+)(in) = Na(+)(out). The enzyme catalyses K(+)(in) = K(+)(out). Its activity is regulated as follows. Activated by cAMP, and at 10-100 times higher concentrations, also by cGMP. cAMP binding promotes tetramerization and formation of an active channel. Compared to other family members, cAMP has less stimulatory effect on HCN1 because part of the molecules already contain bound cAMP and form homotetramers when cAMP levels are low, this inherent tetramerization in HCN1 results in a weaker response to increased cAMP. Functionally, hyperpolarization-activated ion channel that are permeable to sodium and potassium ions. Exhibits weak selectivity for potassium over sodium ions. Contributes to the native pacemaker currents in heart (If) and in neurons (Ih). Participates in cerebellar mechanisms of motor learning. May mediate responses to sour stimuli. This is Potassium/sodium hyperpolarization-activated cyclic nucleotide-gated channel 1 (Hcn1) from Rattus norvegicus (Rat).